A 302-amino-acid chain; its full sequence is Oxygen-dependent coproporphyrinogen-III oxidase (302 aa).

Serine 94 contacts substrate. The a divalent metal cation site is built by histidine 98 and histidine 108. Histidine 108 (proton donor) is an active-site residue. A substrate-binding site is contributed by 110–112 (NVR). Residues histidine 147 and histidine 177 each coordinate a divalent metal cation. Residues 242 to 277 (YVEFNLVYDRGTLFGLQTGGRTESILMSMPPLVRWQ) form an important for dimerization region. 260–262 (GGR) is a binding site for substrate.

It belongs to the aerobic coproporphyrinogen-III oxidase family. Homodimer. It depends on a divalent metal cation as a cofactor.

Its subcellular location is the cytoplasm. The enzyme catalyses coproporphyrinogen III + O2 + 2 H(+) = protoporphyrinogen IX + 2 CO2 + 2 H2O. The protein operates within porphyrin-containing compound metabolism; protoporphyrin-IX biosynthesis; protoporphyrinogen-IX from coproporphyrinogen-III (O2 route): step 1/1. Functionally, involved in the heme biosynthesis. Catalyzes the aerobic oxidative decarboxylation of propionate groups of rings A and B of coproporphyrinogen-III to yield the vinyl groups in protoporphyrinogen-IX. The sequence is that of Oxygen-dependent coproporphyrinogen-III oxidase from Shewanella sp. (strain MR-4).